A 317-amino-acid chain; its full sequence is N-acetyl-gamma-glutamyl-phosphate reductase (317 aa).

C136 is a catalytic residue.

Belongs to the NAGSA dehydrogenase family. Type 1 subfamily.

The protein resides in the cytoplasm. The enzyme catalyses N-acetyl-L-glutamate 5-semialdehyde + phosphate + NADP(+) = N-acetyl-L-glutamyl 5-phosphate + NADPH + H(+). It functions in the pathway amino-acid biosynthesis; L-arginine biosynthesis; N(2)-acetyl-L-ornithine from L-glutamate: step 3/4. In terms of biological role, catalyzes the NADPH-dependent reduction of N-acetyl-5-glutamyl phosphate to yield N-acetyl-L-glutamate 5-semialdehyde. The sequence is that of N-acetyl-gamma-glutamyl-phosphate reductase from Stenotrophomonas maltophilia (strain R551-3).